Reading from the N-terminus, the 488-residue chain is Ribulose bisphosphate carboxylase large chain (488 aa).

Residues Asn-127 and Thr-177 each contribute to the substrate site. Lys-179 (proton acceptor) is an active-site residue. Lys-181 lines the substrate pocket. 3 residues coordinate Mg(2+): Lys-205, Asp-207, and Glu-208. Lys-205 bears the N6-carboxylysine mark. His-297 (proton acceptor) is an active-site residue. Positions 298, 330, and 382 each coordinate substrate.

This sequence belongs to the RuBisCO large chain family. Type I subfamily. Heterohexadecamer of 8 large chains and 8 small chains. Requires Mg(2+) as cofactor.

Its subcellular location is the plastid. The protein resides in the chloroplast. The enzyme catalyses 2 (2R)-3-phosphoglycerate + 2 H(+) = D-ribulose 1,5-bisphosphate + CO2 + H2O. The catalysed reaction is D-ribulose 1,5-bisphosphate + O2 = 2-phosphoglycolate + (2R)-3-phosphoglycerate + 2 H(+). Its function is as follows. RuBisCO catalyzes two reactions: the carboxylation of D-ribulose 1,5-bisphosphate, the primary event in carbon dioxide fixation, as well as the oxidative fragmentation of the pentose substrate in the photorespiration process. Both reactions occur simultaneously and in competition at the same active site. This chain is Ribulose bisphosphate carboxylase large chain, found in Guillardia theta (Cryptophyte).